We begin with the raw amino-acid sequence, 473 residues long: GTPase Der (473 aa).

EngA-type G domains follow at residues 5-170 (PVVA…PNQE) and 178-351 (LKLA…QSSM). Residues 11–18 (GRPNVGKS), 58–62 (DTGGI), 123–126 (NKVD), 184–191 (GRPNVGKS), 231–235 (DTAGV), and 296–299 (NKWD) each bind GTP. The 85-residue stretch at 352–436 (FEVSTNRLTQ…PLNVVFKLNE (85 aa)) folds into the KH-like domain. Residues 438-454 (PYANKSDTPTKAKTQQL) are compositionally biased toward polar residues. The segment at 438–473 (PYANKSDTPTKAKTQQLRQRERNRAQKFTTKDKKPR) is disordered. Residues 455 to 473 (RQRERNRAQKFTTKDKKPR) show a composition bias toward basic and acidic residues.

It belongs to the TRAFAC class TrmE-Era-EngA-EngB-Septin-like GTPase superfamily. EngA (Der) GTPase family. As to quaternary structure, associates with the 50S ribosomal subunit.

Its function is as follows. GTPase that plays an essential role in the late steps of ribosome biogenesis. The protein is GTPase Der of Psychrobacter arcticus (strain DSM 17307 / VKM B-2377 / 273-4).